The following is a 405-amino-acid chain: Tryptophan synthase beta chain (405 aa).

An N6-(pyridoxal phosphate)lysine modification is found at Lys-98.

The protein belongs to the TrpB family. As to quaternary structure, tetramer of two alpha and two beta chains. Pyridoxal 5'-phosphate serves as cofactor.

It catalyses the reaction (1S,2R)-1-C-(indol-3-yl)glycerol 3-phosphate + L-serine = D-glyceraldehyde 3-phosphate + L-tryptophan + H2O. It participates in amino-acid biosynthesis; L-tryptophan biosynthesis; L-tryptophan from chorismate: step 5/5. Functionally, the beta subunit is responsible for the synthesis of L-tryptophan from indole and L-serine. The sequence is that of Tryptophan synthase beta chain from Stenotrophomonas maltophilia (strain R551-3).